The primary structure comprises 124 residues: Non-specific lipid-transfer protein (124 aa).

Residues 1–26 (MANSGVMKLVCLVLACMVVAAPLAEA) form the signal peptide. Disulfide bonds link cysteine 30-cysteine 77, cysteine 40-cysteine 54, cysteine 55-cysteine 100, and cysteine 75-cysteine 114.

This sequence belongs to the plant LTP family.

Functionally, plant non-specific lipid-transfer proteins transfer phospholipids as well as galactolipids across membranes. May play a role in wax or cutin deposition in the cell walls of expanding epidermal cells and certain secretory tissues. This chain is Non-specific lipid-transfer protein, found in Macadamia integrifolia (Macadamia nut).